Reading from the N-terminus, the 620-residue chain is DNA mismatch repair protein MutL (620 aa).

The tract at residues 353 to 375 (SRANGANDFTGRPFSGTERPRGG) is disordered.

It belongs to the DNA mismatch repair MutL/HexB family.

In terms of biological role, this protein is involved in the repair of mismatches in DNA. It is required for dam-dependent methyl-directed DNA mismatch repair. May act as a 'molecular matchmaker', a protein that promotes the formation of a stable complex between two or more DNA-binding proteins in an ATP-dependent manner without itself being part of a final effector complex. The sequence is that of DNA mismatch repair protein MutL from Chelativorans sp. (strain BNC1).